The chain runs to 502 residues: tRNA-specific adenosine deaminase 1 (502 aa).

The 439-residue stretch at Ser63–Phe501 folds into the A to I editase domain. Residue His87 participates in Zn(2+) binding. Glu89 serves as the catalytic Proton donor. The 1D-myo-inositol hexakisphosphate site is built by Arg93 and Arg94. Cys142 is a binding site for Zn(2+). Ser191 carries the phosphoserine modification. Cys299 provides a ligand contact to Zn(2+). 4 residues coordinate 1D-myo-inositol hexakisphosphate: Lys302, Arg305, Lys435, and Lys470.

The protein belongs to the ADAT1 family. It depends on 1D-myo-inositol hexakisphosphate as a cofactor.

It carries out the reaction adenosine(37) in tRNA(Ala) + H2O + H(+) = inosine(37) in tRNA(Ala) + NH4(+). Functionally, specifically deaminates adenosine-37 to inosine in tRNA-Ala. In Macaca fascicularis (Crab-eating macaque), this protein is tRNA-specific adenosine deaminase 1 (ADAT1).